The sequence spans 1054 residues: MKQPNINLAACILWLLSIITAVAAETDAERNTGVFARNSAARNRSPGNEPPGYATRFKGVTWDVANWRLTTTELDQGHYQSRGSVANGYLGINVAAVGPFFELDIPVSGDVINGWPVFSRRQTFATISDFYSFQRSINATNFPWLDKYGGDLISGVPHWSGLILDLGDGNFLDATVKNSTISNFSSTLDMKGGILTWQYTWSPEKHNGTYDIFYQLVAHKLHVNQALVRLEITPSRDGNVSVVNVIDGYSAVRTDFKGSGQDGSAIYTSVNPEGISNVTAFIYAELSGTEGVDLSSSSLVDDKPYIHMNGSTIAQSVNVKLRAGQTTKIDKFVGAASTDGFKNPRQAAKEASARALRTGYEESLKSHIAEWATVFPSDSTEDYTIPGKKWLPLDHHIIEASIVSVVNPYYLLQSTVSNNALAAVKNAPLNRGSIAVGGLTSDSYGGLVFWDADIWMQPGLVVAFPEASQIFSNYRVDKYGQALRNAQTQHLSSKNDTYFSPDAAVYPWTSGRFANCTATGPCFDYQYHLNGDIGMQIVNNWVTTGDTEHFKSKLFPVYNSIATFFSQLVEKNGTKWTVTNMTDPDEYANLVDGGGYTMPLIATTLKYANQFREMFGIGANQTWNEIAQNVQVSRDQASQITLEYTTMNGSTQVKQADIVLNTFPLHYTEDYTHDNALRDLDYYAAKQSPNGPAMTYAIFSIVANEVSPSGCSAYTYGQYSFSPYVRAPFFQFSEQLMDDWSINGGTHPAYPFLTGNGGANQVAVFGYLGLRLIPDGILHLNPNLPPQIPHLRYRTFYWHGWPLEASANYTQTTIQRATNRRPLTSADPKYASAPITVHVGPANNITVYSLPPSGQLVIPNRQIGSISTVPGNLVQCQPVFSPNEFAPGQFPISAVDGAASTKWQPRRASSTSSLTVTLPDHASSATISGFAFDWAQAPPVSAKVVLHDEPLHPVTDPENGDASGSSPTTPASSVTVWESAKVPLSDPYDPIKIDLNMIMSYKGNTTNVTLPSTVPATKFATLLIRGNQALGPVEVRAGNGTGATVAEWSIVRSS.

Positions 1 to 24 are cleaved as a signal peptide; sequence MKQPNINLAACILWLLSIITAVAA. 7 N-linked (GlcNAc...) asparagine glycosylation sites follow: Asn-138, Asn-178, Asn-183, Asn-207, Asn-239, Asn-277, and Asn-309. Residue 450-451 participates in substrate binding; it reads WD. Residues Asn-495, Asn-515, Asn-572, and Asn-580 are each glycosylated (N-linked (GlcNAc...) asparagine). The active-site Proton donor is the Glu-586. N-linked (GlcNAc...) asparagine glycans are attached at residues Asn-620 and Asn-648. 654–655 contributes to the substrate binding site; that stretch reads KQ. Asn-808 and Asn-844 each carry an N-linked (GlcNAc...) asparagine glycan. Residues 950-974 form a disordered region; that stretch reads PLHPVTDPENGDASGSSPTTPASSV. Residues 962–974 show a composition bias toward low complexity; sequence ASGSSPTTPASSV. Asn-1004, Asn-1007, and Asn-1039 each carry an N-linked (GlcNAc...) asparagine glycan.

It belongs to the glycosyl hydrolase 65 family.

Its subcellular location is the secreted. The protein resides in the cell wall. It catalyses the reaction alpha,alpha-trehalose + H2O = alpha-D-glucose + beta-D-glucose. Cell wall acid trehalase that catalyzes hydrolysis of the disaccharide trehalose and required for growth on trehalose as carbon source. Plays a role in virulence. The chain is Cell wall acid trehalase ARB_03719 from Arthroderma benhamiae (strain ATCC MYA-4681 / CBS 112371) (Trichophyton mentagrophytes).